The primary structure comprises 404 residues: Cysteine desulfurase IscS (404 aa).

Residues 75 to 76 (AT), asparagine 155, glutamine 183, and 203 to 205 (SAH) contribute to the pyridoxal 5'-phosphate site. Lysine 206 is subject to N6-(pyridoxal phosphate)lysine. Residue threonine 243 coordinates pyridoxal 5'-phosphate. The active-site Cysteine persulfide intermediate is cysteine 328. [2Fe-2S] cluster is bound at residue cysteine 328.

This sequence belongs to the class-V pyridoxal-phosphate-dependent aminotransferase family. NifS/IscS subfamily. Homodimer. Forms a heterotetramer with IscU, interacts with other sulfur acceptors. The cofactor is pyridoxal 5'-phosphate.

The protein resides in the cytoplasm. The enzyme catalyses (sulfur carrier)-H + L-cysteine = (sulfur carrier)-SH + L-alanine. The protein operates within cofactor biosynthesis; iron-sulfur cluster biosynthesis. Master enzyme that delivers sulfur to a number of partners involved in Fe-S cluster assembly, tRNA modification or cofactor biosynthesis. Catalyzes the removal of elemental sulfur atoms from cysteine to produce alanine. Functions as a sulfur delivery protein for Fe-S cluster synthesis onto IscU, an Fe-S scaffold assembly protein, as well as other S acceptor proteins. The polypeptide is Cysteine desulfurase IscS (Shewanella loihica (strain ATCC BAA-1088 / PV-4)).